The primary structure comprises 207 residues: Outer-membrane lipoprotein LolB (207 aa).

A signal peptide spans 1–21 (MPLPDFRFIRLLPLAALVLTA). Residue Cys-22 is the site of N-palmitoyl cysteine attachment. Cys-22 carries S-diacylglycerol cysteine lipidation.

The protein belongs to the LolB family. As to quaternary structure, monomer.

The protein localises to the cell outer membrane. In terms of biological role, plays a critical role in the incorporation of lipoproteins in the outer membrane after they are released by the LolA protein. The polypeptide is Outer-membrane lipoprotein LolB (Escherichia coli O6:H1 (strain CFT073 / ATCC 700928 / UPEC)).